The following is a 148-amino-acid chain: MQVILLEKVVNLGNLGDIVKVKDGYGRNFLIPQGKAKRATEANKAEFEARRAELEKQQAEQLAAAQKRGEKLAGFMLQVTQKAGVDGRLFGSVTNGDIAEALTAQGFEVSKSEVRLPEGPLKAIGDYQVHIALHHDVVVEITVSVLGE.

The protein belongs to the bacterial ribosomal protein bL9 family.

Its function is as follows. Binds to the 23S rRNA. The chain is Large ribosomal subunit protein bL9 from Methylobacillus flagellatus (strain ATCC 51484 / DSM 6875 / VKM B-1610 / KT).